Here is a 341-residue protein sequence, read N- to C-terminus: MSAPSTSTVVRVPFTELQSLLQAIFQRHGCSEAVARVLAHNCASAQRDGAHSHGVFRMPGYVSTLASGWVDGQATPQVSDVAAGYVRVDAAGGFAQPALAAARELLVAKARSAGIAVLAIHNSHHFAALWPDVEPFAEEGLVALSVVNSMTCVVPHGARKPLFGTNPIAFAAPCAEHDPIVFDMATSAMAHGDVQIAARAGQQLPEGMGVDADGQPTTDPKAILEGGALLPFGGHKGSALSMMVELLAAALTGGHFSWEFDWSGHPGAKTPWTGQLIIVINPGKAEGERFAQRSRELVEHMQAVGLTRMPGERRYREREVAEEEGVAVTEQELQGLKELLG.

The Charge relay system role is filled by serine 52. The active-site Proton donor is the histidine 53. Arginine 57 provides a ligand contact to substrate. Residue 125–129 (HFAAL) coordinates NADP(+). Residue threonine 165 participates in substrate binding. 183–185 (DMA) is a binding site for NADP(+). Position 191–192 (191–192 (HG)) interacts with substrate. Aspartate 193 serves as the catalytic Charge relay system. NADP(+) contacts are provided by residues 235–236 (HK) and 308–314 (RMPGERR).

Belongs to the LDH2/MDH2 oxidoreductase family. As to quaternary structure, homodimer.

It catalyses the reaction L-pipecolate + NADP(+) = Delta(1)-piperideine-2-carboxylate + NADPH + H(+). It carries out the reaction L-proline + NADP(+) = 1-pyrroline-2-carboxylate + NADPH + H(+). The enzyme catalyses N-methyl-L-alanine + NADP(+) + H2O = methylamine + pyruvate + NADPH + H(+). Is inhibited by the substrate analog pyrrole-2-carboxylate, but not by N-formylphenylalanine. Functionally, catalyzes the reduction of both Delta(1)-pyrroline-2-carboxylate (Pyr2C) and Delta(1)-piperideine-2-carboxylate (Pip2C) to L-proline and L-pipecolate, respectively, using NADPH as the electron donor. Can use NADH instead of NADPH, although with much less efficiency. Plays an essential role in the catabolism of D-proline and D-lysine, which allows P.putida to grow on each of these amino-acids as a sole carbon source; D-lysine appears to be catabolized only through the pipecolate pathway. Can also catalyze the reverse oxidation reactions, albeit at a much lower rate. To a lesser extent, is able to catalyze in vitro the NADPH-dependent formation of N-alkyl-L-amino acids from the corresponding alpha-oxo acids and alkylamines, e.g. the formation of N-methylalanine from pyruvate and N-methylamine; cannot use ammonia as substrate for these reductive amination reactions. Shows neither malate dehydrogenase nor lactate dehydrogenase activity. The protein is Delta(1)-pyrroline-2-carboxylate/Delta(1)-piperideine-2-carboxylate reductase of Pseudomonas putida (Arthrobacter siderocapsulatus).